Reading from the N-terminus, the 202-residue chain is Dephospho-CoA kinase (202 aa).

The DPCK domain maps to 5 to 202 (ILGLTGGIGS…FYLTLRGGQP (198 aa)). An ATP-binding site is contributed by 13 to 18 (GSGKSA).

The protein belongs to the CoaE family.

Its subcellular location is the cytoplasm. The catalysed reaction is 3'-dephospho-CoA + ATP = ADP + CoA + H(+). It functions in the pathway cofactor biosynthesis; coenzyme A biosynthesis; CoA from (R)-pantothenate: step 5/5. Its function is as follows. Catalyzes the phosphorylation of the 3'-hydroxyl group of dephosphocoenzyme A to form coenzyme A. The sequence is that of Dephospho-CoA kinase from Stutzerimonas stutzeri (Pseudomonas stutzeri).